The sequence spans 208 residues: Small ribosomal subunit protein uS4 (208 aa).

The tract at residues 29-48 (MERRPYGPGQHGRARRKQDS) is disordered. Residues 95–155 (QRLDALVLRA…ERSEKMVPFQ (61 aa)) enclose the S4 RNA-binding domain.

This sequence belongs to the universal ribosomal protein uS4 family. Part of the 30S ribosomal subunit. Contacts protein S5. The interaction surface between S4 and S5 is involved in control of translational fidelity.

In terms of biological role, one of the primary rRNA binding proteins, it binds directly to 16S rRNA where it nucleates assembly of the body of the 30S subunit. Its function is as follows. With S5 and S12 plays an important role in translational accuracy. The polypeptide is Small ribosomal subunit protein uS4 (Micrococcus luteus (strain ATCC 4698 / DSM 20030 / JCM 1464 / CCM 169 / CCUG 5858 / IAM 1056 / NBRC 3333 / NCIMB 9278 / NCTC 2665 / VKM Ac-2230) (Micrococcus lysodeikticus)).